The chain runs to 260 residues: Hydroxyethylthiazole kinase 1 (260 aa).

M39 is a substrate binding site. R115 and T160 together coordinate ATP. Substrate is bound at residue G187.

The protein belongs to the Thz kinase family. Mg(2+) is required as a cofactor.

The enzyme catalyses 5-(2-hydroxyethyl)-4-methylthiazole + ATP = 4-methyl-5-(2-phosphooxyethyl)-thiazole + ADP + H(+). The protein operates within cofactor biosynthesis; thiamine diphosphate biosynthesis; 4-methyl-5-(2-phosphoethyl)-thiazole from 5-(2-hydroxyethyl)-4-methylthiazole: step 1/1. Its function is as follows. Catalyzes the phosphorylation of the hydroxyl group of 4-methyl-5-beta-hydroxyethylthiazole (THZ). The sequence is that of Hydroxyethylthiazole kinase 1 from Streptococcus pneumoniae (strain ATCC 700669 / Spain 23F-1).